A 551-amino-acid polypeptide reads, in one-letter code: Glucose-6-phosphate isomerase (551 aa).

Residues 161–162, 212–217, Gln356, Glu360, His391, and Lys516 contribute to the D-glucose 6-phosphate site; these read GS and SKTFTT. Glu360 functions as the Proton donor in the catalytic mechanism. Catalysis depends on residues His391 and Lys516.

The protein belongs to the GPI family. In terms of assembly, homodimer.

The protein resides in the cytoplasm. Its subcellular location is the cytosol. It catalyses the reaction alpha-D-glucose 6-phosphate = beta-D-fructose 6-phosphate. It functions in the pathway carbohydrate degradation; glycolysis; D-glyceraldehyde 3-phosphate and glycerone phosphate from D-glucose: step 2/4. Functionally, in the cytoplasm, catalyzes the conversion of glucose-6-phosphate to fructose-6-phosphate, the second step in glycolysis, and the reverse reaction during gluconeogenesis. This chain is Glucose-6-phosphate isomerase (gpi1), found in Agaricus bisporus (White button mushroom).